A 436-amino-acid polypeptide reads, in one-letter code: Gustatory receptor for sugar taste 61a (436 aa).

Topologically, residues 1-78 (MSRTSDDIRK…PQDVKFKVRS (78 aa)) are cytoplasmic. A helical membrane pass occupies residues 79–99 (IGLAVTGLFLLLGGMKTLVGA). The Extracellular segment spans residues 100–111 (NILFTEGLNAKN). Residues 112–132 (IVGLVFLIVGMVNWLNFVGFA) form a helical membrane-spanning segment. At 133–164 (RSWSHIMLPWSSVDILMLFPPYKRGKRSLRSK) the chain is on the cytoplasmic side. The chain crosses the membrane as a helical span at residues 165–185 (VNVLALSVVVLAVGDHMLYYA). Over 186 to 214 (SGYCSYSMHILQCHTNHSRITFGLYLEKE) the chain is Extracellular. N-linked (GlcNAc...) asparagine glycosylation is present at Asn201. A helical transmembrane segment spans residues 215 to 235 (FSDIMFIMPFNIFSMCYGFWL). Residues 236–237 (NG) lie on the Cytoplasmic side of the membrane. The helical transmembrane segment at 238–258 (AFTFLWNFMDIFIVMTSIGLA) threads the bilayer. The Extracellular segment spans residues 259 to 304 (QRFQQFAARVGALEGRHVPEALWYDIRRDHIRLCELASLVEASMSN). The chain crosses the membrane as a helical span at residues 305 to 325 (IVFVSCANNVYVICNQALAIF). Topologically, residues 326-334 (TKLRHPINY) are cytoplasmic. Residues 335–355 (VYFWYSLIFLLARTSLVFMTA) traverse the membrane as a helical segment. At 356-436 (SKIHDASLLP…AKSHKGLRCA (81 aa)) the chain is on the extracellular side.

This sequence belongs to the insect chemoreceptor superfamily. Gustatory receptor (GR) family. Gr5a subfamily. In terms of tissue distribution, expressed in sweet sensing neurons of classical chemosensory sensilla, but also in two supersensitive neurons of atypical taste sensilla.

It is found in the cell membrane. Functionally, one of the few identified sugar gustatory receptors identified so far with glucose being its primary ligand and which mediates acceptance behavior. This is Gustatory receptor for sugar taste 61a (Gr61a) from Drosophila melanogaster (Fruit fly).